Here is a 171-residue protein sequence, read N- to C-terminus: 3-hydroxydecanoyl-[acyl-carrier-protein] dehydratase (171 aa).

His-70 is a catalytic residue.

Belongs to the thioester dehydratase family. FabA subfamily. As to quaternary structure, homodimer.

The protein localises to the cytoplasm. It catalyses the reaction a (3R)-hydroxyacyl-[ACP] = a (2E)-enoyl-[ACP] + H2O. It carries out the reaction (3R)-hydroxydecanoyl-[ACP] = (2E)-decenoyl-[ACP] + H2O. The enzyme catalyses (2E)-decenoyl-[ACP] = (3Z)-decenoyl-[ACP]. The protein operates within lipid metabolism; fatty acid biosynthesis. Its function is as follows. Necessary for the introduction of cis unsaturation into fatty acids. Catalyzes the dehydration of (3R)-3-hydroxydecanoyl-ACP to E-(2)-decenoyl-ACP and then its isomerization to Z-(3)-decenoyl-ACP. Can catalyze the dehydratase reaction for beta-hydroxyacyl-ACPs with saturated chain lengths up to 16:0, being most active on intermediate chain length. This Stutzerimonas stutzeri (strain A1501) (Pseudomonas stutzeri) protein is 3-hydroxydecanoyl-[acyl-carrier-protein] dehydratase.